Reading from the N-terminus, the 393-residue chain is MQQTKKLTQCDVTIAVMSGSFLQRGEPALVSKWYRTKMALAGGIDLVVELPYAFATQKAETFANGAISILNALGVSDICFGSEDGHVQHFYNTLSLQQKKQNTFNQLVQQYISEGNSYAKATSEAFSHILSGHDTIDMSQPNNILGLHYIQAILSQKSTIRAHTIKRFAAHYHDESFTNKHIASATSIRKQLFIGDCSFTSIYPFVPNCTSSLLEEYYHIYHVLHNWETYFPLFKYKLLTMSAKELQHIYEMEEGLEHRILAKIQNATSFLTFMEAIKTKRYTWTRLQRVCTHILTNTTKEEIKSAAIENHAPYIRLLGMSQKGQSYLSKNKKQMSLPLLTHTKTFEHPVLNIERRANAVYLSALQEPLRTKCIQQNITQYPIRYNEIDKTFL.

The ATP site is built by Gly-81, Asn-142, and Arg-167.

The protein belongs to the TmcAL family.

The protein localises to the cytoplasm. It catalyses the reaction cytidine(34) in elongator tRNA(Met) + acetate + ATP = N(4)-acetylcytidine(34) in elongator tRNA(Met) + AMP + diphosphate. Functionally, catalyzes the formation of N(4)-acetylcytidine (ac(4)C) at the wobble position of elongator tRNA(Met), using acetate and ATP as substrates. First activates an acetate ion to form acetyladenylate (Ac-AMP) and then transfers the acetyl group to tRNA to form ac(4)C34. The chain is tRNA(Met) cytidine acetate ligase from Bacillus cytotoxicus (strain DSM 22905 / CIP 110041 / 391-98 / NVH 391-98).